Consider the following 511-residue polypeptide: T-complex protein 1 subunit eta (511 aa).

This sequence belongs to the TCP-1 chaperonin family. Component of the T-complex protein 1 (TCP1) complex.

The protein localises to the cytoplasm. Molecular chaperone; assists the folding of proteins upon ATP hydrolysis. This Encephalitozoon cuniculi (strain GB-M1) (Microsporidian parasite) protein is T-complex protein 1 subunit eta (CCT7).